The following is a 498-amino-acid chain: Envelop protein OPG153 (498 aa).

Residues Cys-43 and Cys-342 are joined by a disulfide bond. The segment at 352-391 (ATDTGHHQDSKINIKDDDVDDDDYNPKPTPIPEPYPRPPF) is disordered. Residues 355–367 (TGHHQDSKINIKD) are compositionally biased toward basic and acidic residues. Positions 378–390 (KPTPIPEPYPRPP) are enriched in pro residues.

It belongs to the orthopoxvirus OPG153 protein family. In terms of assembly, interacts with proteins OPG094 and OPG143. Interacts with OPG154. Interacts with OPG152. Interacts with host laminin.

It is found in the virion membrane. In terms of biological role, envelop protein that mediates acid-dependent endocytosis into host cells. Plays an important role in endocytic entry of the virus by acting as an acid-sensitive membrane fusion suppressor. Low pH in host endosomes triggers conformational changes to allow de-repression of viral fusion complex activity and membrane fusion within vesicles. Also plays a role in bridging the mature virion with structural protein OPG152. This is Envelop protein OPG153 (Protein OPG153) from Variola virus (isolate Human/India/Ind3/1967) (VARV).